A 909-amino-acid chain; its full sequence is Protein translocase subunit SecA (909 aa).

ATP is bound by residues Gln87, 105-109 (GEGKT), and Asp507. Disordered regions lie at residues 567-586 (RRIDNQLRGRSGRQGDPGSS) and 859-909 (YSEA…GKLD). The span at 865 to 889 (EHQSVTEGHEAKQQPFVRKSDKIGR) shows a compositional bias: basic and acidic residues. Zn(2+) contacts are provided by Cys893, Cys895, Cys904, and His905. The span at 899–909 (RKYKQCHGKLD) shows a compositional bias: basic residues.

This sequence belongs to the SecA family. In terms of assembly, monomer and homodimer. Part of the essential Sec protein translocation apparatus which comprises SecA, SecYEG and auxiliary proteins SecDF-YajC and YidC. Requires Zn(2+) as cofactor.

The protein localises to the cell inner membrane. Its subcellular location is the cytoplasm. The catalysed reaction is ATP + H2O + cellular proteinSide 1 = ADP + phosphate + cellular proteinSide 2.. Part of the Sec protein translocase complex. Interacts with the SecYEG preprotein conducting channel. Has a central role in coupling the hydrolysis of ATP to the transfer of proteins into and across the cell membrane, serving both as a receptor for the preprotein-SecB complex and as an ATP-driven molecular motor driving the stepwise translocation of polypeptide chains across the membrane. This Nitrosomonas eutropha (strain DSM 101675 / C91 / Nm57) protein is Protein translocase subunit SecA.